Reading from the N-terminus, the 1857-residue chain is Peripheral-type benzodiazepine receptor-associated protein 1 (1857 aa).

Disordered regions lie at residues 1 to 103 (MEQL…RPED), 284 to 321 (QRET…QEDA), and 565 to 629 (PKDL…DTAS). Positions 55–67 (LRSEESSKPKGDG) are enriched in basic and acidic residues. The segment covering 87–96 (LGQQASSSGP) has biased composition (polar residues). Positions 289-298 (PLPPSWPPGP) are enriched in pro residues. Low complexity-rich tracts occupy residues 299 to 316 (ALQA…GEAT) and 603 to 616 (SLSN…IHNS). In terms of domain architecture, SH3 1 spans 653 to 720 (ARIQVFLARY…PSNFVERVSD (68 aa)). Residues 729-789 (PELADLSHSS…PSPEGLGEPP (61 aa)) are disordered. Residues 755–764 (GGQSSVGRSQ) are compositionally biased toward low complexity. Fibronectin type-III domains lie at 791-882 (VPYP…ARAG), 884-976 (VPSQ…TLPA), and 981-1081 (APLD…LAPA). Disordered stretches follow at residues 1083 to 1311 (LPAR…SDEE), 1330 to 1479 (FSIP…CSRG), and 1501 to 1601 (YDSE…RGVR). Residues 1098-1116 (ARAPLASASPGPGDPSSPL) are compositionally biased toward low complexity. The span at 1138-1147 (EMAKGSHEDP) shows a compositional bias: basic and acidic residues. The span at 1201–1218 (ASSSTQGARAQQAPNTEM) shows a compositional bias: polar residues. Residues 1259 to 1274 (DIQEEEEEEEEEEEEE) show a composition bias toward acidic residues. The span at 1278–1292 (RTCSFQKQVAGNSIR) shows a compositional bias: polar residues. The span at 1333-1346 (PEEEEEEEEDEEEE) shows a compositional bias: acidic residues. Basic and acidic residues-rich tracts occupy residues 1420–1429 (RPPDPREHCS) and 1554–1586 (AWEK…EARG). The 69-residue stretch at 1625-1693 (LPVRIFVALF…PCNMVAEVAV (69 aa)) folds into the SH3 2 domain. Disordered stretches follow at residues 1723–1761 (VYST…VPSA) and 1823–1857 (SNFL…RVQC). Residues 1764–1831 (KAPHSMVAAF…PSNFLEGPGP (68 aa)) enclose the SH3 3 domain.

This sequence belongs to the RIMBP family. In terms of assembly, interacts with RIMS1 and RIMS2. Interacts with TSPO. Interacts with CACNA1A. Predominantly expressed in brain, pituitary gland and thymus in adults. In adult brain, highest expression found in temporal lobe and the putamen, followed by amygdala, caudate nucleus, cerebral cortex, occipital and frontal lobe. A high expression level is also observed in fetal tissues like brain, heart, kidney and thymus.

It localises to the cytoplasm. It is found in the mitochondrion. Its function is as follows. Required for synaptic transmission regulation. It probably controls the recruitement of voltage-gated calcium channels to the presynaptic membrane, and modulates neurotransmitter release. The protein is Peripheral-type benzodiazepine receptor-associated protein 1 of Homo sapiens (Human).